The following is a 178-amino-acid chain: ATP synthase subunit delta (178 aa).

This sequence belongs to the ATPase delta chain family. In terms of assembly, F-type ATPases have 2 components, F(1) - the catalytic core - and F(0) - the membrane proton channel. F(1) has five subunits: alpha(3), beta(3), gamma(1), delta(1), epsilon(1). F(0) has three main subunits: a(1), b(2) and c(10-14). The alpha and beta chains form an alternating ring which encloses part of the gamma chain. F(1) is attached to F(0) by a central stalk formed by the gamma and epsilon chains, while a peripheral stalk is formed by the delta and b chains.

Its subcellular location is the cell membrane. Its function is as follows. F(1)F(0) ATP synthase produces ATP from ADP in the presence of a proton or sodium gradient. F-type ATPases consist of two structural domains, F(1) containing the extramembraneous catalytic core and F(0) containing the membrane proton channel, linked together by a central stalk and a peripheral stalk. During catalysis, ATP synthesis in the catalytic domain of F(1) is coupled via a rotary mechanism of the central stalk subunits to proton translocation. Functionally, this protein is part of the stalk that links CF(0) to CF(1). It either transmits conformational changes from CF(0) to CF(1) or is implicated in proton conduction. The sequence is that of ATP synthase subunit delta from Streptococcus pyogenes serotype M6 (strain ATCC BAA-946 / MGAS10394).